Here is a 557-residue protein sequence, read N- to C-terminus: Formate--tetrahydrofolate ligase (557 aa).

Residue 44–51 coordinates ATP; the sequence is TPLGEGKS.

This sequence belongs to the formate--tetrahydrofolate ligase family.

The enzyme catalyses (6S)-5,6,7,8-tetrahydrofolate + formate + ATP = (6R)-10-formyltetrahydrofolate + ADP + phosphate. It functions in the pathway one-carbon metabolism; tetrahydrofolate interconversion. This chain is Formate--tetrahydrofolate ligase, found in Desulfotalea psychrophila (strain LSv54 / DSM 12343).